The sequence spans 252 residues: Uridylate kinase (252 aa).

23–26 serves as a coordination point for ATP; that stretch reads KLSG. Gly65 contacts UMP. Gly66 and Arg70 together coordinate ATP. UMP contacts are provided by residues Asp85 and 146-153; that span reads LGAPFFST. ATP contacts are provided by Thr173, Gln174, Tyr179, and Asp182.

This sequence belongs to the UMP kinase family. As to quaternary structure, homohexamer.

The protein resides in the cytoplasm. The enzyme catalyses UMP + ATP = UDP + ADP. The protein operates within pyrimidine metabolism; CTP biosynthesis via de novo pathway; UDP from UMP (UMPK route): step 1/1. With respect to regulation, inhibited by UTP. Functionally, catalyzes the reversible phosphorylation of UMP to UDP. The chain is Uridylate kinase from Thermobifida fusca (strain YX).